Consider the following 256-residue polypeptide: Protein FixA (256 aa).

The protein belongs to the ETF beta-subunit/FixA family. Heterodimer of FixA and FixB.

It functions in the pathway amine and polyamine metabolism; carnitine metabolism. Functionally, required for anaerobic carnitine reduction. May bring reductant to CaiA. The chain is Protein FixA from Salmonella paratyphi A (strain ATCC 9150 / SARB42).